The chain runs to 235 residues: MAAVRGVRVVGTSPGLLLGRGMRAFLLLLCLAARGGALYFHIGETEKKCFIEEIPDETMVIGNYRTQLYDKQREEYQPATPGLGMFVEVKDPEDKVILARQYGSEGRFTFTSHTPGEHQICLHSNSTKFSLFAGGMLRVHLDIQVGEHANDYAEIAAKDKLSELQLRVRQLVEQVEQIQKEQNYQRWREERFRQTSESTNQRVLWWSILQTLILVAIGVWQMRHLKSFFEAKKLV.

Positions 1–37 (MAAVRGVRVVGTSPGLLLGRGMRAFLLLLCLAARGGA) are cleaved as a signal peptide. Residues 38–202 (LYFHIGETEK…RQTSESTNQR (165 aa)) are Lumenal-facing. The GOLD domain occupies 47–145 (KKCFIEEIPD…MLRVHLDIQV (99 aa)). Residues 121 to 160 (CLHSNSTKFSLFAGGMLRVHLDIQVGEHANDYAEIAAKDK) form a required for interaction with STX17 region. N-linked (GlcNAc...) asparagine glycosylation is present at N125. Residues 154-184 (EIAAKDKLSELQLRVRQLVEQVEQIQKEQNY) are a coiled coil. Residue K160 is modified to N6-acetyllysine. The chain crosses the membrane as a helical span at residues 203–222 (VLWWSILQTLILVAIGVWQM). Residues 223–235 (RHLKSFFEAKKLV) are Cytoplasmic-facing. The short motif at 228-229 (FF) is the COPII vesicle coat-binding element. The COPI vesicle coat-binding motif lies at 228-235 (FFEAKKLV).

Belongs to the EMP24/GP25L family. In terms of assembly, monomer and homodimer in endoplasmic reticulum. Predominantly monomeric and to lesser extent homodimeric in endoplasmic reticulum-Golgi intermediate compartment and cis-Golgi network. Probably oligomerizes with other members of the EMP24/GP25L family such as TMED2, TMED7 and TMED10. Interacts with TMED5. Interacts (via C-terminus) with COPG1; the interaction involves dimeric TMED9. Interacts with PTPN2 and SPAST. Interacts with STX17; the interaction is direct. Post-translationally, N-linked glycosylated containing high mannose.

The protein localises to the endoplasmic reticulum membrane. The protein resides in the golgi apparatus. Its subcellular location is the cis-Golgi network membrane. It localises to the endoplasmic reticulum-Golgi intermediate compartment membrane. It is found in the trans-Golgi network membrane. Functionally, appears to be involved in vesicular protein trafficking, mainly in the early secretory pathway. In COPI vesicle-mediated retrograde transport involved in the coatomer recruitment to membranes of the early secretory pathway. Increases coatomer-dependent activity of ARFGAP2. Thought to play a crucial role in the specific retention of p24 complexes in cis-Golgi membranes; specifically contributes to the coupled localization of TMED2 and TMED10 in the cis-Golgi network. May be involved in organization of intracellular membranes, such as of the ER-Golgi intermediate compartment and the Golgi apparatus. Involved in ER localization of PTPN2. This chain is Transmembrane emp24 domain-containing protein 9 (Tmed9), found in Rattus norvegicus (Rat).